Reading from the N-terminus, the 299-residue chain is Nucleotide-binding protein SAV_6292 (299 aa).

Residue 23-30 (GMSGAGRS) participates in ATP binding. A GTP-binding site is contributed by 74 to 77 (DVRG).

This sequence belongs to the RapZ-like family.

Displays ATPase and GTPase activities. The sequence is that of Nucleotide-binding protein SAV_6292 from Streptomyces avermitilis (strain ATCC 31267 / DSM 46492 / JCM 5070 / NBRC 14893 / NCIMB 12804 / NRRL 8165 / MA-4680).